The primary structure comprises 274 residues: Dermonecrotic toxin LspiSicTox-betaIII2 (274 aa).

The active site involves histidine 5. 2 residues coordinate Mg(2+): glutamate 25 and aspartate 27. Histidine 41 (nucleophile) is an active-site residue. 2 disulfides stabilise this stretch: cysteine 45–cysteine 51 and cysteine 47–cysteine 189. Aspartate 85 lines the Mg(2+) pocket.

The protein belongs to the arthropod phospholipase D family. Class II subfamily. The cofactor is Mg(2+). As to expression, expressed by the venom gland.

It is found in the secreted. The catalysed reaction is an N-(acyl)-sphingosylphosphocholine = an N-(acyl)-sphingosyl-1,3-cyclic phosphate + choline. The enzyme catalyses an N-(acyl)-sphingosylphosphoethanolamine = an N-(acyl)-sphingosyl-1,3-cyclic phosphate + ethanolamine. It carries out the reaction a 1-acyl-sn-glycero-3-phosphocholine = a 1-acyl-sn-glycero-2,3-cyclic phosphate + choline. It catalyses the reaction a 1-acyl-sn-glycero-3-phosphoethanolamine = a 1-acyl-sn-glycero-2,3-cyclic phosphate + ethanolamine. Dermonecrotic toxins cleave the phosphodiester linkage between the phosphate and headgroup of certain phospholipids (sphingolipid and lysolipid substrates), forming an alcohol (often choline) and a cyclic phosphate. This toxin acts on sphingomyelin (SM). It may also act on ceramide phosphoethanolamine (CPE), lysophosphatidylcholine (LPC) and lysophosphatidylethanolamine (LPE), but not on lysophosphatidylserine (LPS), and lysophosphatidylglycerol (LPG). It acts by transphosphatidylation, releasing exclusively cyclic phosphate products as second products. Induces dermonecrosis, hemolysis, increased vascular permeability, edema, inflammatory response, and platelet aggregation. The protein is Dermonecrotic toxin LspiSicTox-betaIII2 of Loxosceles spinulosa (Recluse spider).